Consider the following 165-residue polypeptide: MKTPRLPIALQQAVMRCLREKLAQANLKLGRNYPEPKLVYQQRGTSAGTAWLESYEIRLNPVLMMENQQAFVDEVVPHELAHLLVWKHFGRVAPHGKEWKWMMEAVLGVPARRTHQFELESVRRNTFPYRCQCQQHQLTVRRHNRVVRGEATYRCVKCGEPLVAE.

The SprT-like domain maps to 19 to 163 (REKLAQANLK…RCVKCGEPLV (145 aa)). His78 provides a ligand contact to Zn(2+). Glu79 is a catalytic residue. His82 contacts Zn(2+).

This sequence belongs to the SprT family. It depends on Zn(2+) as a cofactor.

The protein localises to the cytoplasm. This chain is Protein SprT, found in Enterobacter sp. (strain 638).